The sequence spans 521 residues: Lysine--tRNA ligase (521 aa).

Positions 32-40 (PSGTVHIGN) match the 'HIGH' region motif. Residues 280–284 (KISSS) carry the 'KMSKS' region motif.

This sequence belongs to the class-I aminoacyl-tRNA synthetase family.

It is found in the cytoplasm. The enzyme catalyses tRNA(Lys) + L-lysine + ATP = L-lysyl-tRNA(Lys) + AMP + diphosphate. In Borrelia garinii subsp. bavariensis (strain ATCC BAA-2496 / DSM 23469 / PBi) (Borreliella bavariensis), this protein is Lysine--tRNA ligase.